The following is a 221-amino-acid chain: ATP phosphoribosyltransferase (221 aa).

This sequence belongs to the ATP phosphoribosyltransferase family. Short subfamily. In terms of assembly, heteromultimer composed of HisG and HisZ subunits.

Its subcellular location is the cytoplasm. It carries out the reaction 1-(5-phospho-beta-D-ribosyl)-ATP + diphosphate = 5-phospho-alpha-D-ribose 1-diphosphate + ATP. It functions in the pathway amino-acid biosynthesis; L-histidine biosynthesis; L-histidine from 5-phospho-alpha-D-ribose 1-diphosphate: step 1/9. Functionally, catalyzes the condensation of ATP and 5-phosphoribose 1-diphosphate to form N'-(5'-phosphoribosyl)-ATP (PR-ATP). Has a crucial role in the pathway because the rate of histidine biosynthesis seems to be controlled primarily by regulation of HisG enzymatic activity. The polypeptide is ATP phosphoribosyltransferase (Symbiobacterium thermophilum (strain DSM 24528 / JCM 14929 / IAM 14863 / T)).